An 863-amino-acid polypeptide reads, in one-letter code: Leucine--tRNA ligase (863 aa).

Residues 42–53 (PYPSGSGLHVGH) carry the 'HIGH' region motif. Positions 635-639 (KMSKS) match the 'KMSKS' region motif. ATP is bound at residue lysine 638.

The protein belongs to the class-I aminoacyl-tRNA synthetase family.

It localises to the cytoplasm. It carries out the reaction tRNA(Leu) + L-leucine + ATP = L-leucyl-tRNA(Leu) + AMP + diphosphate. The chain is Leucine--tRNA ligase from Salinibacter ruber (strain DSM 13855 / M31).